A 250-amino-acid polypeptide reads, in one-letter code: NAD(P)H-quinone oxidoreductase subunit K (250 aa).

Positions 63, 64, 128, and 159 each coordinate [4Fe-4S] cluster.

The protein belongs to the complex I 20 kDa subunit family. As to quaternary structure, NDH-1 can be composed of about 15 different subunits; different subcomplexes with different compositions have been identified which probably have different functions. [4Fe-4S] cluster is required as a cofactor.

It is found in the cellular thylakoid membrane. It carries out the reaction a plastoquinone + NADH + (n+1) H(+)(in) = a plastoquinol + NAD(+) + n H(+)(out). The enzyme catalyses a plastoquinone + NADPH + (n+1) H(+)(in) = a plastoquinol + NADP(+) + n H(+)(out). Functionally, NDH-1 shuttles electrons from an unknown electron donor, via FMN and iron-sulfur (Fe-S) centers, to quinones in the respiratory and/or the photosynthetic chain. The immediate electron acceptor for the enzyme in this species is believed to be plastoquinone. Couples the redox reaction to proton translocation, and thus conserves the redox energy in a proton gradient. Cyanobacterial NDH-1 also plays a role in inorganic carbon-concentration. This chain is NAD(P)H-quinone oxidoreductase subunit K, found in Rippkaea orientalis (strain PCC 8801 / RF-1) (Cyanothece sp. (strain PCC 8801)).